A 198-amino-acid chain; its full sequence is Ribonuclease HII (198 aa).

The RNase H type-2 domain maps to 9 to 198 (ITVAGADEAG…LLPDQLKIDF (190 aa)). A divalent metal cation is bound by residues Asp15, Glu16, and Asp107.

This sequence belongs to the RNase HII family. Mn(2+) serves as cofactor. Requires Mg(2+) as cofactor.

It localises to the cytoplasm. The catalysed reaction is Endonucleolytic cleavage to 5'-phosphomonoester.. Its function is as follows. Endonuclease that specifically degrades the RNA of RNA-DNA hybrids. In Christiangramia forsetii (strain DSM 17595 / CGMCC 1.15422 / KT0803) (Gramella forsetii), this protein is Ribonuclease HII.